A 142-amino-acid chain; its full sequence is Large ribosomal subunit protein bL19 (142 aa).

This sequence belongs to the bacterial ribosomal protein bL19 family.

Its function is as follows. This protein is located at the 30S-50S ribosomal subunit interface and may play a role in the structure and function of the aminoacyl-tRNA binding site. The chain is Large ribosomal subunit protein bL19 from Rickettsia bellii (strain OSU 85-389).